The chain runs to 2567 residues: Unconventional myosin-XVIIIb (2567 aa).

The disordered stretch occupies residues 41-508; it reads LVRGTEKEAK…SRDSDQAPED (468 aa). Positions 44 to 54 are enriched in basic and acidic residues; it reads GTEKEAKEARQ. Over residues 71 to 104 the composition is skewed to low complexity; it reads SISQPNSKSSSGTRSGSQQISQDDQSSSPGSSDI. 2 stretches are compositionally biased toward basic and acidic residues: residues 105 to 116 and 160 to 176; these read LGKESEGSRSPD and LDPDSAKPEKTHPHDAP. Positions 196-206 are enriched in polar residues; sequence SRTPCGSQAST. Basic and acidic residues-rich tracts occupy residues 251–265, 278–287, and 326–349; these read TELKEAEPQGKDRQG, RPGKAEKEGA, and SKWDGPQNKKDKEGVLLSKAEKTG. A compositionally biased stretch (polar residues) spans 350–362; it reads EPQTQMEKTSQVQ. Basic and acidic residues-rich tracts occupy residues 367–377, 410–420, 471–485, and 492–508; these read DDLRMGEKAGE, SQTEKGCEAPK, LEKDAERPRIRKENQ, and EEGKGGQSRDSDQAPED. The 763-residue stretch at 571–1333 folds into the Myosin motor domain; the sequence is DQVEDLASLI…VISRLEKQRE (763 aa). Residue 660–667 participates in ATP binding; sequence GWSGAGKT. The interval 1208 to 1232 is disordered; the sequence is VESRSGQESPPPPQPGRDKPGAGGP. Positions 1213-1240 are GPA; the sequence is GQESPPPPQPGRDKPGAGGPLALDIPAL. Ser1216 carries the post-translational modification Phosphoserine. The IQ domain maps to 1336-1365; it reads VSQSIVLFQAACKGFLSRQEFKKLKIRRLA. 3 coiled-coil regions span residues 1396–1783, 1825–1961, and 2014–2090; these read SATI…GLIG, KTSV…STVD, and ESQQ…VASS. A tail region spans residues 1426-2083; that stretch reads NELRQNTDLL…IRRIADLQAA (658 aa). Ser1829 carries the phosphoserine modification. Over residues 2139-2153 the composition is skewed to polar residues; that stretch reads TMRTPSRQSATSSRI. Disordered stretches follow at residues 2139 to 2194 and 2217 to 2249; these read TMRT…PVSP and STERLEPASSPLASRSTNTSPLSREKLPSPSAA. Basic and acidic residues predominate over residues 2158–2167; sequence INEEAGDTER. The span at 2168 to 2185 shows a compositional bias: polar residues; sequence TQSALALSRARSTNVHSK. A Phosphoserine modification is found at Ser2193. Polar residues predominate over residues 2227 to 2238; sequence PLASRSTNTSPL. Phosphoserine is present on residues Ser2296 and Ser2309. The segment at 2357–2376 is disordered; it reads SRPSMGRKLSSPTTPRDMLL. Residue Ser2377 is modified to Phosphoserine. 2 disordered regions span residues 2444–2471 and 2494–2567; these read FLPAIRKPQTPTSLAGSAKGGQDGSQRS and KSPE…YLQK. Residues 2494–2504 show a composition bias toward basic and acidic residues; it reads KSPEPKEDPAH. Positions 2506–2520 are enriched in low complexity; it reads SDSSSSSGSIVSFKS. Residues 2537–2556 are compositionally biased toward basic and acidic residues; it reads GGERTSPERREPGTGRKDDD.

This sequence belongs to the TRAFAC class myosin-kinesin ATPase superfamily. Myosin family. Homodimer. May interact with F actin through the GPA motif (Gly/Pro/Ala-rich). In terms of tissue distribution, selectively expressed in cardiac and skeletal muscles. Weakly expressed in testis, pancreas, placenta, prostate, lung and thymus.

It is found in the cytoplasm. Its subcellular location is the nucleus. The protein localises to the myofibril. The protein resides in the sarcomere. May be involved in intracellular trafficking of the muscle cell when in the cytoplasm, whereas entering the nucleus, may be involved in the regulation of muscle specific genes. May play a role in the control of tumor development and progression; restored MYO18B expression in lung cancer cells suppresses anchorage-independent growth. The polypeptide is Unconventional myosin-XVIIIb (MYO18B) (Homo sapiens (Human)).